The chain runs to 45 residues: Peroxidase 3 (45 aa).

Belongs to the peroxidase family. Classical plant (class III) peroxidase subfamily. It depends on heme b as a cofactor. The cofactor is Ca(2+).

It is found in the secreted. It catalyses the reaction 2 a phenolic donor + H2O2 = 2 a phenolic radical donor + 2 H2O. Removal of H(2)O(2), oxidation of toxic reductants, biosynthesis and degradation of lignin, suberization, auxin catabolism, response to environmental stresses such as wounding, pathogen attack and oxidative stress. These functions might be dependent on each isozyme/isoform in each plant tissue. This is Peroxidase 3 from Capsicum annuum (Capsicum pepper).